A 167-amino-acid polypeptide reads, in one-letter code: NAD(P)H-quinone oxidoreductase subunit I, chloroplastic (167 aa).

4Fe-4S ferredoxin-type domains lie at 55–84 (GRIHFEFDKCIACEVCVRVCPIDLPVVDWK) and 95–124 (LNYSIDFGICIFCGNCVEYCPTNCLSMTEE). Cys64, Cys67, Cys70, Cys74, Cys104, Cys107, Cys110, and Cys114 together coordinate [4Fe-4S] cluster.

Belongs to the complex I 23 kDa subunit family. NDH is composed of at least 16 different subunits, 5 of which are encoded in the nucleus. [4Fe-4S] cluster is required as a cofactor.

The protein localises to the plastid. It is found in the chloroplast thylakoid membrane. It catalyses the reaction a plastoquinone + NADH + (n+1) H(+)(in) = a plastoquinol + NAD(+) + n H(+)(out). It carries out the reaction a plastoquinone + NADPH + (n+1) H(+)(in) = a plastoquinol + NADP(+) + n H(+)(out). In terms of biological role, NDH shuttles electrons from NAD(P)H:plastoquinone, via FMN and iron-sulfur (Fe-S) centers, to quinones in the photosynthetic chain and possibly in a chloroplast respiratory chain. The immediate electron acceptor for the enzyme in this species is believed to be plastoquinone. Couples the redox reaction to proton translocation, and thus conserves the redox energy in a proton gradient. This is NAD(P)H-quinone oxidoreductase subunit I, chloroplastic from Atropa belladonna (Belladonna).